Consider the following 209-residue polypeptide: Ribosomal RNA large subunit methyltransferase E (209 aa).

The S-adenosyl-L-methionine site is built by Gly-63, Trp-65, Asp-83, Asp-99, and Asp-124. Lys-164 (proton acceptor) is an active-site residue.

It belongs to the class I-like SAM-binding methyltransferase superfamily. RNA methyltransferase RlmE family.

It is found in the cytoplasm. It catalyses the reaction uridine(2552) in 23S rRNA + S-adenosyl-L-methionine = 2'-O-methyluridine(2552) in 23S rRNA + S-adenosyl-L-homocysteine + H(+). Its function is as follows. Specifically methylates the uridine in position 2552 of 23S rRNA at the 2'-O position of the ribose in the fully assembled 50S ribosomal subunit. This is Ribosomal RNA large subunit methyltransferase E from Vibrio cholerae serotype O1 (strain ATCC 39541 / Classical Ogawa 395 / O395).